We begin with the raw amino-acid sequence, 112 residues long: Photosystem II reaction center Psb28 protein (112 aa).

Belongs to the Psb28 family. Part of the photosystem II complex.

Its subcellular location is the cellular thylakoid membrane. This chain is Photosystem II reaction center Psb28 protein, found in Microcystis aeruginosa (strain NIES-843 / IAM M-2473).